The chain runs to 115 residues: NAD(P)H-quinone oxidoreductase subunit M (115 aa).

Belongs to the complex I NdhM subunit family. NDH-1 can be composed of about 15 different subunits; different subcomplexes with different compositions have been identified which probably have different functions.

Its subcellular location is the cellular thylakoid membrane. The catalysed reaction is a plastoquinone + NADH + (n+1) H(+)(in) = a plastoquinol + NAD(+) + n H(+)(out). It catalyses the reaction a plastoquinone + NADPH + (n+1) H(+)(in) = a plastoquinol + NADP(+) + n H(+)(out). Its function is as follows. NDH-1 shuttles electrons from an unknown electron donor, via FMN and iron-sulfur (Fe-S) centers, to quinones in the respiratory and/or the photosynthetic chain. The immediate electron acceptor for the enzyme in this species is believed to be plastoquinone. Couples the redox reaction to proton translocation, and thus conserves the redox energy in a proton gradient. Cyanobacterial NDH-1 also plays a role in inorganic carbon-concentration. In Synechococcus sp. (strain CC9902), this protein is NAD(P)H-quinone oxidoreductase subunit M.